The following is a 106-amino-acid chain: MPRQSPPNLAKLIALDLLTVGRVPLLLLVLIFSCAMGVVFMTHHTRQAISAKDQAFMERERLDNEWRNLILEETALAEHSRVQQLARKDLEMKRPDSDKEVVINLK.

At 1–22 (MPRQSPPNLAKLIALDLLTVGR) the chain is on the cytoplasmic side. A helical transmembrane segment spans residues 23–43 (VPLLLLVLIFSCAMGVVFMTH). Topologically, residues 44–106 (HTRQAISAKD…SDKEVVINLK (63 aa)) are periplasmic.

This sequence belongs to the FtsL family. Part of a complex composed of FtsB, FtsL and FtsQ.

It is found in the cell inner membrane. Its function is as follows. Essential cell division protein. May link together the upstream cell division proteins, which are predominantly cytoplasmic, with the downstream cell division proteins, which are predominantly periplasmic. This chain is Cell division protein FtsL, found in Vibrio cholerae serotype O1 (strain ATCC 39315 / El Tor Inaba N16961).